The primary structure comprises 159 residues: Ubiquitin-like protein ATG12 (159 aa).

The tract at residues 1–40 is disordered; it reads MASPQPPFGGGSNSNSNTASPSNNLSPTASPLLEGRDSPN. Residues 13–27 show a composition bias toward low complexity; that stretch reads NSNSNTASPSNNLSP. Glycine 159 is covalently cross-linked (Glycyl lysine isopeptide (Gly-Lys) (interchain with K-218 in ATG5)).

The protein belongs to the ATG12 family. As to quaternary structure, forms a conjugate with ATG5. Forms a thioester bond with the 'Cys-116' of ATG10. Interacts with the ATG7 C-terminal 40 amino acids domain. The ATG12-ATG5 conjugate forms a complex with several units of ATG16. The ATG12-ATG5 conjugate also associates with ATG3.

It localises to the preautophagosomal structure membrane. It is found in the cytoplasm. In terms of biological role, ubiquitin-like protein involved in cytoplasm to vacuole transport (Cvt), autophagy vesicles formation, mitophagy, and nucleophagy. Conjugation with ATG5 through a ubiquitin-like conjugating system involving also ATG7 as an E1-like activating enzyme and ATG10 as an E2-like conjugating enzyme, is essential for its function. The ATG12-ATG5 conjugate acts as an E3-like enzyme which is required for lipidation of ATG8 and ATG8 association to the vesicle membranes. ATG12-ATG5 rearranges the ATG3 catalytic center and enhances its E2 activity. Plays a role in sexual development and perithecia formation. This chain is Ubiquitin-like protein ATG12, found in Sordaria macrospora (strain ATCC MYA-333 / DSM 997 / K(L3346) / K-hell).